Here is a 202-residue protein sequence, read N- to C-terminus: dTTP/UTP pyrophosphatase (202 aa).

The Proton acceptor role is filled by aspartate 80.

Belongs to the Maf family. YhdE subfamily. It depends on a divalent metal cation as a cofactor.

Its subcellular location is the cytoplasm. It catalyses the reaction dTTP + H2O = dTMP + diphosphate + H(+). The catalysed reaction is UTP + H2O = UMP + diphosphate + H(+). Nucleoside triphosphate pyrophosphatase that hydrolyzes dTTP and UTP. May have a dual role in cell division arrest and in preventing the incorporation of modified nucleotides into cellular nucleic acids. The chain is dTTP/UTP pyrophosphatase from Alkalilimnicola ehrlichii (strain ATCC BAA-1101 / DSM 17681 / MLHE-1).